The primary structure comprises 318 residues: Ankyrin repeat and SOCS box protein 7 (318 aa).

ANK repeat units lie at residues 13 to 42 (QEESQIQAAVAAGDVHTVRKMLEQGYSPNG), 46 to 75 (NGWTLLHFSAARGKERCVRVFLEHGADPTV), 80 to 109 (GGFTALHYAAMHGRARIARLMLESEYRSDI), 116 to 145 (DGWTPLHVAAHYGRDSFVRLLLEFKAEVDP), 149 to 178 (KGTTPLQLAIIRERSSCVKILLDHNANIDI), 180 to 208 (NGFLLRYAVIKSNHSYCRMFLQRGADTNL), and 213 to 242 (DGQTPLHLSALRDDVLCARMLYNYGADTNT). The 54-residue stretch at 265–318 (LDFLQEVTRQPRNLQDLCRIKIRQCIGLQNLKLLDELPIAKVMKDYLKHKSDDI) folds into the SOCS box domain.

Belongs to the ankyrin SOCS box (ASB) family. Interacts with CUL5. Interacts with RNF7. Interacts with PSRC1.

The protein operates within protein modification; protein ubiquitination. Probable substrate-recognition component of a SCF-like ECS (Elongin-Cullin-SOCS-box protein) E3 ubiquitin-protein ligase complex which mediates the ubiquitination and subsequent proteasomal degradation of target proteins. Plays a role in spindle dynamics and genome integrity by targeting the mitotic progression protein PSRC1 for proteasomal degradation in a cell cycle-dependent manner. Also participates in meiosis by mediating the proper attachment between kinetochores and microtubules. This is Ankyrin repeat and SOCS box protein 7 (ASB7) from Pongo abelii (Sumatran orangutan).